The primary structure comprises 106 residues: uncharacterized protein (106 aa).

This sequence belongs to the HesB/IscA family.

This is an uncharacterized protein from Bradyrhizobium diazoefficiens (strain JCM 10833 / BCRC 13528 / IAM 13628 / NBRC 14792 / USDA 110).